A 149-amino-acid chain; its full sequence is Large ribosomal subunit protein uL16c (149 aa).

It belongs to the universal ribosomal protein uL16 family. Part of the 50S ribosomal subunit.

It localises to the plastid. The protein resides in the organellar chromatophore. The chain is Large ribosomal subunit protein uL16c (rpl16) from Paulinella chromatophora.